Here is a 321-residue protein sequence, read N- to C-terminus: L-carnitine dehydrogenase (321 aa).

14-19 (GSGVIG) contributes to the NAD(+) binding site.

Belongs to the 3-hydroxyacyl-CoA dehydrogenase family. L-carnitine dehydrogenase subfamily. Homodimer.

The protein localises to the cytoplasm. It catalyses the reaction carnitine + NAD(+) = 3-dehydrocarnitine + NADH + H(+). The protein operates within amine and polyamine metabolism; carnitine metabolism. Functionally, catalyzes the NAD(+)-dependent oxidation of L-carnitine to 3-dehydrocarnitine. The sequence is that of L-carnitine dehydrogenase from Pseudomonas putida (strain ATCC 47054 / DSM 6125 / CFBP 8728 / NCIMB 11950 / KT2440).